Reading from the N-terminus, the 309-residue chain is Probable manganese-dependent inorganic pyrophosphatase (309 aa).

6 residues coordinate Mn(2+): His9, Asp13, Asp15, Asp75, His97, and Asp149.

Belongs to the PPase class C family. It depends on Mn(2+) as a cofactor.

It localises to the cytoplasm. The catalysed reaction is diphosphate + H2O = 2 phosphate + H(+). This chain is Probable manganese-dependent inorganic pyrophosphatase, found in Bacillus licheniformis (strain ATCC 14580 / DSM 13 / JCM 2505 / CCUG 7422 / NBRC 12200 / NCIMB 9375 / NCTC 10341 / NRRL NRS-1264 / Gibson 46).